The sequence spans 466 residues: Cysteine--tRNA ligase (466 aa).

Residue Cys28 coordinates Zn(2+). Residues 30 to 40 carry the 'HIGH' region motif; the sequence is PTVYNYIHIGN. The Zn(2+) site is built by Cys208, His233, and Glu237. The short motif at 265 to 269 is the 'KMSKS' region element; sequence KMSKS. Residue Lys268 coordinates ATP.

It belongs to the class-I aminoacyl-tRNA synthetase family. In terms of assembly, monomer. It depends on Zn(2+) as a cofactor.

It localises to the cytoplasm. It carries out the reaction tRNA(Cys) + L-cysteine + ATP = L-cysteinyl-tRNA(Cys) + AMP + diphosphate. The sequence is that of Cysteine--tRNA ligase from Staphylococcus aureus (strain USA300).